We begin with the raw amino-acid sequence, 249 residues long: Methyl-coenzyme M reductase I subunit gamma (249 aa).

Position 120 (R120) interacts with coenzyme M.

The protein belongs to the methyl-coenzyme M reductase gamma subunit family. MCR is a hexamer of two alpha, two beta, and two gamma chains, forming a dimer of heterotrimers. Coenzyme F430 serves as cofactor.

It localises to the cytoplasm. It catalyses the reaction coenzyme B + methyl-coenzyme M = methane + coenzyme M-coenzyme B heterodisulfide. Its pathway is one-carbon metabolism; methyl-coenzyme M reduction; methane from methyl-coenzyme M: step 1/1. With respect to regulation, methyl-coenzyme M reductase activity is inhibited by 3-nitrooxypropanol (3-NOP) in vitro and in vivo, by oxidation of its active site Ni(I), which stops both growth and methanogenesis. Is also inhibited by the reaction product CoM-S-S-CoB. Its function is as follows. Component of the methyl-coenzyme M reductase (MCR) I that catalyzes the reductive cleavage of methyl-coenzyme M (CoM-S-CH3 or 2-(methylthio)ethanesulfonate) using coenzyme B (CoB or 7-mercaptoheptanoylthreonine phosphate) as reductant which results in the production of methane and the mixed heterodisulfide of CoB and CoM (CoM-S-S-CoB). This is the final step in methanogenesis. Neither N-6-mercaptohexanoylthreonine phosphate (H-S-HxoTP) nor N-8-mercaptooctanoylthreonine phosphate (H-SOcoTP) nor any other thiol compound such as CoA or CoM can substitute for CoB as the electron donor. This Methanothermobacter marburgensis (strain ATCC BAA-927 / DSM 2133 / JCM 14651 / NBRC 100331 / OCM 82 / Marburg) (Methanobacterium thermoautotrophicum) protein is Methyl-coenzyme M reductase I subunit gamma (mcrG).